A 1385-amino-acid chain; its full sequence is DNA-directed RNA polymerase subunit beta' (1385 aa).

4 residues coordinate Zn(2+): Cys-72, Cys-74, Cys-87, and Cys-90. Residues Asp-463, Asp-465, and Asp-467 each contribute to the Mg(2+) site. Zn(2+) is bound by residues Cys-813, Cys-887, Cys-894, and Cys-897.

The protein belongs to the RNA polymerase beta' chain family. The RNAP catalytic core consists of 2 alpha, 1 beta, 1 beta' and 1 omega subunit. When a sigma factor is associated with the core the holoenzyme is formed, which can initiate transcription. Mg(2+) serves as cofactor. It depends on Zn(2+) as a cofactor.

It catalyses the reaction RNA(n) + a ribonucleoside 5'-triphosphate = RNA(n+1) + diphosphate. In terms of biological role, DNA-dependent RNA polymerase catalyzes the transcription of DNA into RNA using the four ribonucleoside triphosphates as substrates. The protein is DNA-directed RNA polymerase subunit beta' of Trichlorobacter lovleyi (strain ATCC BAA-1151 / DSM 17278 / SZ) (Geobacter lovleyi).